Consider the following 180-residue polypeptide: Endothelin-2 (180 aa).

The N-terminal stretch at 1-26 is a signal peptide; that stretch reads MVALPTAWCSVALALLVALHEGKSQS. A propeptide spanning residues 27–47 is cleaved from the precursor; the sequence is AATSEEPPAPSARARGSHLRL. 2 disulfide bridges follow: Cys-50-Cys-64 and Cys-52-Cys-60. A propeptide spanning residues 71 to 180 is cleaved from the precursor; that stretch reads VNTPGQTAPY…ESSHSRWRKR (110 aa). The endothelin-like stretch occupies residues 97–112; the sequence is CECYSTRDSACVTFCH. A disordered region spans residues 157–180; that stretch reads NFTRHQQQKATREPESSHSRWRKR.

It belongs to the endothelin/sarafotoxin family.

The protein resides in the secreted. In terms of biological role, endothelins are endothelium-derived vasoconstrictor peptides. The polypeptide is Endothelin-2 (EDN2) (Atelerix albiventris (Middle-African hedgehog)).